The following is a 501-amino-acid chain: Solute carrier family 2, facilitated glucose transporter member 5 (501 aa).

Met1 is subject to N-acetylmethionine. Topologically, residues 1-18 are cytoplasmic; sequence MEQQDPIKKEGRLTPVLA. A helical transmembrane segment spans residues 19-39; the sequence is LATLIAAFGSSFQYGYNVAAV. Tyr32 serves as a coordination point for D-fructose. Residues 40–68 lie on the Extracellular side of the membrane; the sequence is NSPAELMKAFYNETHYSRFSEYISEFSLT. N-linked (GlcNAc...) asparagine glycosylation is present at Asn51. A helical transmembrane segment spans residues 69–91; sequence LLWSISVSMFPFGGFVGSLMVGP. Residues 92 to 98 are Cytoplasmic-facing; it reads LVNRLGR. A helical transmembrane segment spans residues 99–119; it reads KGTLLFNNIFSIVPAILMGTS. Over 120–126 the chain is Extracellular; it reads KTARSYE. Residues 127–149 traverse the membrane as a helical segment; it reads MIILSRLLVGICAGLSSNVVPMY. The Cytoplasmic segment spans residues 150 to 161; sequence LGELSPKNLRGA. The chain crosses the membrane as a helical span at residues 162-182; it reads LGVVPQLFITVGILVAQIVGL. Residue Gln167 participates in D-fructose binding. Residues 183–192 lie on the Extracellular side of the membrane; that stretch reads RSLLATEEGW. Residues 193–213 form a helical membrane-spanning segment; sequence PILLGLTAIPAALQLLLLPFF. The Cytoplasmic segment spans residues 214–277; sequence PESPRYLLIQ…MFRMRSLRWQ (64 aa). Residues 278 to 298 traverse the membrane as a helical segment; sequence VISIIILMGGQQLSGVNAIYY. D-fructose contacts are provided by residues Gln288 and 296-298; that span reads IYY. At 299 to 313 the chain is on the extracellular side; it reads YADQIYLSAGVKDQD. The chain crosses the membrane as a helical span at residues 314-334; the sequence is VQYVTVGTGAVNVLMTICAVF. The Cytoplasmic portion of the chain corresponds to 335 to 342; the sequence is VVEYLGRR. Residues 343 to 363 traverse the membrane as a helical segment; sequence ALLLLGFSVCFIACCVLTVAL. At 364–371 the chain is on the extracellular side; it reads ALQDRVSW. Residues 372–394 form a helical membrane-spanning segment; that stretch reads MPYISIVCVISYVIGHALGPSPI. His387 lines the D-fructose pocket. Topologically, residues 395–412 are cytoplasmic; it reads PALLITEVFLQSSRSAAY. Residues 413 to 433 form a helical membrane-spanning segment; the sequence is MVGGTVHWLSNFAVGLVFPFI. 419–420 lines the D-fructose pocket; sequence HW. Topologically, residues 434–439 are extracellular; it reads QVGLGA. The chain crosses the membrane as a helical span at residues 440–460; the sequence is YSFIIFAVICLLTTIYIFLIV. Residues 461-501 are Cytoplasmic-facing; sequence PETKGKTFVEINHIFTKMNKVSDVHPAKDELKDIPLSAVEL.

It belongs to the major facilitator superfamily. Sugar transporter (TC 2.A.1.1) family. Glucose transporter subfamily.

It localises to the apical cell membrane. It is found in the cell membrane. Its subcellular location is the sarcolemma. It carries out the reaction D-fructose(out) = D-fructose(in). Functionally, functions as a fructose transporter that has only low activity with other monosaccharides. Can mediate the uptake of deoxyglucose, but with low efficiency. Essential for fructose uptake in the small intestine. Plays a role in the regulation of salt uptake and blood pressure in response to dietary fructose. Required for the development of high blood pressure in response to high dietary fructose intake. This Equus caballus (Horse) protein is Solute carrier family 2, facilitated glucose transporter member 5.